The following is a 591-amino-acid chain: Metalloendopeptidase OPG085 (591 aa).

H41 provides a ligand contact to Zn(2+). E44 is a catalytic residue. Zn(2+) contacts are provided by H45 and E112.

It belongs to the peptidase M44 family. Requires Zn(2+) as cofactor. Post-translationally, undergoes proteolytic processing during the course of infection. May be cleaved into 46 kDa and 22 kDa products (Potential).

Its subcellular location is the virion. Functionally, probably involved in maturation of some viral proteins by processing them preferentially at Ala-Gly-|-Ser/Thr/Lys motifs. Does not seem to be responsible for the cleavage of major core proteins. The sequence is that of Metalloendopeptidase OPG085 (OPG085) from Monkeypox virus.